The primary structure comprises 468 residues: Methionine aminopeptidase 2 (468 aa).

The span at 1–10 (MGSKTFEGEG) shows a compositional bias: basic and acidic residues. The interval 1-106 (MGSKTFEGEG…PPRVPLDDLF (106 aa)) is disordered. Over residues 16 to 25 (DPSNSTSPNS) the composition is skewed to polar residues. Residues 31–40 (RGAHLSRDGD) show a composition bias toward basic and acidic residues. Acidic residues predominate over residues 46–56 (GDGDDGADGDE). The segment covering 61-75 (VTTTPLTEQQPSSET) has biased composition (polar residues). The segment covering 78–90 (KKKKRRKPKKKIS) has biased composition (basic residues). Position 219 (His-219) interacts with substrate. A divalent metal cation is bound by residues Asp-240, Asp-251, and His-320. A substrate-binding site is contributed by His-328. Glu-353 and Glu-449 together coordinate a divalent metal cation.

This sequence belongs to the peptidase M24A family. Methionine aminopeptidase eukaryotic type 2 subfamily. Co(2+) is required as a cofactor. The cofactor is Zn(2+). Requires Mn(2+) as cofactor. It depends on Fe(2+) as a cofactor.

It localises to the cytoplasm. It catalyses the reaction Release of N-terminal amino acids, preferentially methionine, from peptides and arylamides.. In terms of biological role, cotranslationally removes the N-terminal methionine from nascent proteins. The N-terminal methionine is often cleaved when the second residue in the primary sequence is small and uncharged (Met-Ala-, Cys, Gly, Pro, Ser, Thr, or Val). This chain is Methionine aminopeptidase 2, found in Aspergillus oryzae (strain ATCC 42149 / RIB 40) (Yellow koji mold).